The following is a 691-amino-acid chain: Elongation factor G (691 aa).

The region spanning 8–283 (EDYRNFGIMA…AVVDFLPNPT (276 aa)) is the tr-type G domain. GTP is bound by residues 17–24 (AHIDAGKT), 81–85 (DTPGH), and 135–138 (NKMD).

Belongs to the TRAFAC class translation factor GTPase superfamily. Classic translation factor GTPase family. EF-G/EF-2 subfamily.

The protein resides in the cytoplasm. Functionally, catalyzes the GTP-dependent ribosomal translocation step during translation elongation. During this step, the ribosome changes from the pre-translocational (PRE) to the post-translocational (POST) state as the newly formed A-site-bound peptidyl-tRNA and P-site-bound deacylated tRNA move to the P and E sites, respectively. Catalyzes the coordinated movement of the two tRNA molecules, the mRNA and conformational changes in the ribosome. This Maricaulis maris (strain MCS10) (Caulobacter maris) protein is Elongation factor G.